The following is a 109-amino-acid chain: Nucleoid-associated protein Ldb1634 (109 aa).

The disordered stretch occupies residues 18-40 (MMKQAKKLQEQMAQEQENITTQE).

The protein belongs to the YbaB/EbfC family. In terms of assembly, homodimer.

It is found in the cytoplasm. Its subcellular location is the nucleoid. In terms of biological role, binds to DNA and alters its conformation. May be involved in regulation of gene expression, nucleoid organization and DNA protection. The sequence is that of Nucleoid-associated protein Ldb1634 from Lactobacillus delbrueckii subsp. bulgaricus (strain ATCC 11842 / DSM 20081 / BCRC 10696 / JCM 1002 / NBRC 13953 / NCIMB 11778 / NCTC 12712 / WDCM 00102 / Lb 14).